A 402-amino-acid chain; its full sequence is 1-deoxy-D-xylulose 5-phosphate reductoisomerase (402 aa).

Thr-13, Gly-14, Ser-15, Ile-16, and Asn-126 together coordinate NADPH. Lys-127 provides a ligand contact to 1-deoxy-D-xylulose 5-phosphate. Glu-128 lines the NADPH pocket. Mn(2+) is bound at residue Asp-152. The 1-deoxy-D-xylulose 5-phosphate site is built by Ser-153, Glu-154, Ser-188, and His-211. Residue Glu-154 participates in Mn(2+) binding. Position 217 (Gly-217) interacts with NADPH. The 1-deoxy-D-xylulose 5-phosphate site is built by Ser-224, Asn-229, Lys-230, and Glu-233. Glu-233 is a binding site for Mn(2+).

Belongs to the DXR family. Mg(2+) serves as cofactor. Requires Mn(2+) as cofactor.

It catalyses the reaction 2-C-methyl-D-erythritol 4-phosphate + NADP(+) = 1-deoxy-D-xylulose 5-phosphate + NADPH + H(+). The protein operates within isoprenoid biosynthesis; isopentenyl diphosphate biosynthesis via DXP pathway; isopentenyl diphosphate from 1-deoxy-D-xylulose 5-phosphate: step 1/6. Functionally, catalyzes the NADPH-dependent rearrangement and reduction of 1-deoxy-D-xylulose-5-phosphate (DXP) to 2-C-methyl-D-erythritol 4-phosphate (MEP). The sequence is that of 1-deoxy-D-xylulose 5-phosphate reductoisomerase from Psychrobacter cryohalolentis (strain ATCC BAA-1226 / DSM 17306 / VKM B-2378 / K5).